We begin with the raw amino-acid sequence, 770 residues long: Protein argonaute (770 aa).

The tract at residues 1-151 is N-terminal domain; it reads MKAKVVINLV…VIHIIHQIQS (151 aa). One can recognise a PAZ domain in the interval 154 to 272; that stretch reads TLWELVNKDP…LLPQLVVPTY (119 aa). Positions 276 to 361 are interdomain connector; the sequence is QLESDVAKEI…SQLLLWTNYS (86 aa). A mid domain region spans residues 362–544; that stretch reads RKYPVILPYE…LSKLGVKYYV (183 aa). In terms of domain architecture, Piwi spans 473 to 756; sequence GLAFIAARNK…FANAIRNEWK (284 aa). Active-site residues include Asp558, Glu596, Asp628, and His745. Asp558 is a Mn(2+) binding site. 3 residues coordinate Mn(2+): Asp628, His745, and Val770.

The protein belongs to the argonaute family. Long pAgo subfamily. As to quaternary structure, monomer. Requires Mn(2+) as cofactor.

Its activity is regulated as follows. Inhibited at greater than 500 mM NaCl. A DNA-guided ssDNA endonuclease that may play a role in defense against invading mobile genetic elements. Uses short 5'-phospho-ssDNA sequences as guides (gDNA) to bind complementary target strands, resulting in cleavage of the target DNA (tDNA). Endonucleolytically cleaves DNA in short dsDNA (the gDNA indicates where to cleave on the tDNA). Efficient guide-dependent target DNA cleavage requires a minimal gDNA length of 15 nucleotides (nt) and works up to at least 31 nt. Overexpression decreases plasmid transformation efficiency. Has no appreciable activity with gRNA or on target RNA. Also has guide-independent activity on plasmid DNA called 'chopping'. The cleavage site is 10 nucleotides (nt) downstream of the target residue base-paired with the 5'-end of the gDNA, cleavage is insensitive to adenine methylation. DNA cleavage produces 5'-phosphomonoesters (as it can be ligated by T4 DNA ligase). The protein is Protein argonaute of Pyrococcus furiosus (strain ATCC 43587 / DSM 3638 / JCM 8422 / Vc1).